Here is a 156-residue protein sequence, read N- to C-terminus: Neuroactive polyprotein R15 (156 aa).

Residues Met1–Leu26 form the signal peptide. A propeptide spanning residues Pro27 to Ser48 is cleaved from the precursor. Cys74 and Cys81 form a disulfide bridge. Pyrrolidone carboxylic acid is present on Gln120.

Expressed within the abdominal ganglion in neurons R15, RB(HE), the two L9(G) gill motoneurons, and L40 interneuron, all are parts of autonomic control circuit that contributes to implementing a central command to coordinate autonomic activity with escape locomotion.

Its subcellular location is the secreted. Its function is as follows. The alpha-1 peptide acts as an osmoregulatory peptide, increasing blood volume, and also modulates the activity of a set of cardiac motor neurons that control heart rate. In Aplysia californica (California sea hare), this protein is Neuroactive polyprotein R15.